The chain runs to 1169 residues: Integrin alpha-X (1169 aa).

The signal sequence occupies residues 1–19 (MSCTWIAFLLLLGFVSCLG). At 20-1116 (FNLDAEKLTH…EMYKVHNPVP (1097 aa)) the chain is on the extracellular side. 2 FG-GAP repeats span residues 23 to 78 (DAEK…NCEP) and 79 to 138 (ISLQ…QSQN). A disulfide bridge links Cys-69 with Cys-76. Asn-89 carries an N-linked (GlcNAc...) asparagine glycan. Disulfide bonds link Cys-108–Cys-126 and Cys-116–Cys-146. The region spanning 152–330 (DIVFLIDGSG…DALKDIENQL (179 aa)) is the VWFA domain. 4 residues coordinate Mg(2+): Asp-158, Ser-160, Ser-162, and Asp-260. Asn-267 carries N-linked (GlcNAc...) asparagine glycosylation. FG-GAP repeat units lie at residues 341–392 (ETPS…PTFI), 393–444 (NMSQ…SRHW), 445–505 (RPKS…GSRW), 508–566 (GTTL…QDIA), and 571–631 (QRIS…FTPA). Asn-393 carries N-linked (GlcNAc...) asparagine glycosylation. 4 residues coordinate Ca(2+): Asp-467, Asp-469, Asp-471, and Asp-475. A disulfide bridge connects residues Cys-496 and Cys-507. Ca(2+)-binding residues include Asp-531, Asn-533, Asp-535, Asp-539, Asp-594, Asp-598, and Asp-602. Disulfide bonds link Cys-640–Cys-721 and Cys-656–Cys-711. The N-linked (GlcNAc...) asparagine glycan is linked to Asn-734. Cystine bridges form between Cys-770/Cys-776 and Cys-858/Cys-873. N-linked (GlcNAc...) asparagine glycosylation occurs at Asn-949. 2 disulfides stabilise this stretch: Cys-1007–Cys-1031 and Cys-1036–Cys-1041. 2 N-linked (GlcNAc...) asparagine glycosylation sites follow: Asn-1059 and Asn-1084. A helical membrane pass occupies residues 1117–1137 (LIVGSSVGGLLLLAIITAILY). Residues 1138–1169 (KAGFFKRQYKEMLEEANGQFVSDGTPTPQVAQ) lie on the Cytoplasmic side of the membrane. A GFFKR motif motif is present at residues 1140–1144 (GFFKR).

This sequence belongs to the integrin alpha chain family. As to quaternary structure, heterodimer of an alpha and a beta subunit. Alpha-X associates with beta-2.

It is found in the membrane. In terms of biological role, integrin alpha-X/beta-2 is a receptor for fibrinogen. It recognizes the sequence G-P-R in fibrinogen. It mediates cell-cell interaction during inflammatory responses. It is especially important in monocyte adhesion and chemotaxis. This Mus musculus (Mouse) protein is Integrin alpha-X (Itgax).